The primary structure comprises 272 residues: SKA complex subunit 1 homolog (272 aa).

Positions Ala-48–Lys-75 form a coiled coil.

This sequence belongs to the SKA1 family.

This chain is SKA complex subunit 1 homolog, found in Arabidopsis thaliana (Mouse-ear cress).